Consider the following 247-residue polypeptide: Carboxy-S-adenosyl-L-methionine synthase (247 aa).

Residues tyrosine 39, 64–66 (GCS), 89–90 (DN), 117–118 (DI), asparagine 132, and arginine 199 contribute to the S-adenosyl-L-methionine site.

The protein belongs to the class I-like SAM-binding methyltransferase superfamily. Cx-SAM synthase family. Homodimer.

The catalysed reaction is prephenate + S-adenosyl-L-methionine = carboxy-S-adenosyl-L-methionine + 3-phenylpyruvate + H2O. Functionally, catalyzes the conversion of S-adenosyl-L-methionine (SAM) to carboxy-S-adenosyl-L-methionine (Cx-SAM). This chain is Carboxy-S-adenosyl-L-methionine synthase, found in Klebsiella pneumoniae subsp. pneumoniae (strain ATCC 700721 / MGH 78578).